A 150-amino-acid polypeptide reads, in one-letter code: Large ribosomal subunit protein bL9 (150 aa).

It belongs to the bacterial ribosomal protein bL9 family.

Functionally, binds to the 23S rRNA. In Streptococcus equi subsp. equi (strain 4047), this protein is Large ribosomal subunit protein bL9.